Consider the following 256-residue polypeptide: Glutamate racemase (256 aa).

Substrate-binding positions include 12 to 13 (DS) and 44 to 45 (YG). The active-site Proton donor/acceptor is cysteine 75. 76-77 (NT) contributes to the substrate binding site. Residue cysteine 186 is the Proton donor/acceptor of the active site. 187-188 (TH) is a substrate binding site.

This sequence belongs to the aspartate/glutamate racemases family.

It carries out the reaction L-glutamate = D-glutamate. It functions in the pathway cell wall biogenesis; peptidoglycan biosynthesis. Functionally, provides the (R)-glutamate required for cell wall biosynthesis. In Clostridium acetobutylicum (strain ATCC 824 / DSM 792 / JCM 1419 / IAM 19013 / LMG 5710 / NBRC 13948 / NRRL B-527 / VKM B-1787 / 2291 / W), this protein is Glutamate racemase.